Reading from the N-terminus, the 101-residue chain is Immunity protein CdiI-2 (101 aa).

In terms of assembly, specifically interacts with the truncated CT fragment of cognate toxin protein CdiA-2, which inhibits CdiA-2 tRNA nuclease activity.

In terms of biological role, immunity protein component of a toxin-immunity protein module, which functions as a cellular contact-dependent growth inhibition (CDI) system. CDI modules allow bacteria to communicate with and inhibit the growth of closely related neighboring bacteria in a contact-dependent fashion. Neutralizes the toxic activity of cognate toxin CdiA (C-terminal 301 residue CT fragment) upon expression in E.coli. Does not inhibit toxic activity of CdiA from other strains of B.pseudomallei. Its function is as follows. Expression of this cdiAIB locus in B.thailandensis confers protection against other bacteria carrying the locus; growth inhibition requires cellular contact. The sequence is that of Immunity protein CdiI-2 (cdiI2) from Burkholderia pseudomallei (strain 1026b).